Reading from the N-terminus, the 1079-residue chain is MPKSTDIKSILILGAGPIVIGQACEFDYSGTQACKALKEEGYRIILLNSNPATIMTDPDMADATYVEPIHWEIVEKIIQKEKPDALLPTMGGQTALNCALELDHKGILKKYGVQIIGATVDAIKKAENRKLFEHSMKKLNLETAKCGIAHNIQEAFLVLNNVGFPCIIRPSFTMGGHGGGIAYNHEEFEKICERGLELSPSTELLIDESLIGWKEYEMEVVRDKNDNCIIVCSIENLDPMGIHTGDSITVAPAQTLTDKEYQVMRNASMSILREIGVETGGSNVQFAINPKNGRMIVIEMNPRVSRSSALASKATGFPIAKIAAKLAIGYTLDELANDITGTNTTASFEPSIDYIVTKIPRFNFEKFPGCDDRLTTQMKSVGEVMAIGRTFQESIQKAIRGLEVGASGFDSKISSRDSEYLIKIRRELKDAGSERIWYIGDAFRYGMSINDVFDLTSIDPWFLVQIKEIILLEKKIIKNGFIGLKYDFFYFLKRKGFSDQRIAILTNKNESEIRQLRYKLNLHPVYKRIDTCSAEFSTETAYMYSTWEDECESHPSKNNKKIIILGGGPNRIGQGIEFDYCCVHAAQALREDGFEAIMVNCNPETVSTDYDISDRLYFEPITLENVLEIVRIEKPKGVIIQYGGQTPLKLAHEFEKEGVPIIGTSPDSIDTAENRYRFQKTVNKLRLQQPLNATVLTLDEAYKKADIIGYPIMVRPSYVLGGRAMEIVYEPYGLENYFKTTLKKNNTTPILLDQYLDYATEVDVDAICDGETVLIGGIMEHIEQAGVHSGDSACSLPAYTLTSKVQNEIRRQVKKLAFELSVKGLMNIQFAIKNNKIYIIEVNPRAARTVPFVSKAIGLALAKISVRVMCGKTLLEQGFIKEIIPPYFSVKEAVLPFDKFQGVDPILGPEMRSTGEVMGIGKNFSEAFSKSMLGAHTNMKKSGRVLLSVRNNDKNNIINLAVKLKKLGFKIDATKGTSVALKKSGISSRLVNKVHEGRPHIQDRLKNGEYSYIVNTTSCYQGIKDSKLICRSALQYKVHYDTTVNGAFATVMALNENPIKNIETLQKIHKKIQLFYTKK.

The carboxyphosphate synthetic domain stretch occupies residues 2-403 (PKSTDIKSIL…SIQKAIRGLE (402 aa)). ATP is bound by residues R129, R169, G175, G176, E208, L210, E215, G241, I242, H243, Q285, and E299. Positions 133–328 (EHSMKKLNLE…IAKIAAKLAI (196 aa)) constitute an ATP-grasp 1 domain. Residues Q285, E299, and N301 each coordinate Mg(2+). Residues Q285, E299, and N301 each coordinate Mn(2+). Residues 404–553 (VGASGFDSKI…YSTWEDECES (150 aa)) are oligomerization domain. Residues 554–936 (HPSKNNKKII…AFSKSMLGAH (383 aa)) form a carbamoyl phosphate synthetic domain region. Residues 679-870 (QKTVNKLRLQ…LAKISVRVMC (192 aa)) enclose the ATP-grasp 2 domain. ATP-binding residues include R715, Q754, L756, E761, G786, V787, H788, S789, Q829, and E841. 3 residues coordinate Mg(2+): Q829, E841, and N843. 3 residues coordinate Mn(2+): Q829, E841, and N843. One can recognise an MGS-like domain in the interval 937–1079 (TNMKKSGRVL…KKIQLFYTKK (143 aa)). Residues 937-1079 (TNMKKSGRVL…KKIQLFYTKK (143 aa)) are allosteric domain.

The protein belongs to the CarB family. In terms of assembly, composed of two chains; the small (or glutamine) chain promotes the hydrolysis of glutamine to ammonia, which is used by the large (or ammonia) chain to synthesize carbamoyl phosphate. Tetramer of heterodimers (alpha,beta)4. It depends on Mg(2+) as a cofactor. Mn(2+) is required as a cofactor.

It carries out the reaction hydrogencarbonate + L-glutamine + 2 ATP + H2O = carbamoyl phosphate + L-glutamate + 2 ADP + phosphate + 2 H(+). The enzyme catalyses hydrogencarbonate + NH4(+) + 2 ATP = carbamoyl phosphate + 2 ADP + phosphate + 2 H(+). It functions in the pathway amino-acid biosynthesis; L-arginine biosynthesis; carbamoyl phosphate from bicarbonate: step 1/1. The protein operates within pyrimidine metabolism; UMP biosynthesis via de novo pathway; (S)-dihydroorotate from bicarbonate: step 1/3. Functionally, large subunit of the glutamine-dependent carbamoyl phosphate synthetase (CPSase). CPSase catalyzes the formation of carbamoyl phosphate from the ammonia moiety of glutamine, carbonate, and phosphate donated by ATP, constituting the first step of 2 biosynthetic pathways, one leading to arginine and/or urea and the other to pyrimidine nucleotides. The large subunit (synthetase) binds the substrates ammonia (free or transferred from glutamine from the small subunit), hydrogencarbonate and ATP and carries out an ATP-coupled ligase reaction, activating hydrogencarbonate by forming carboxy phosphate which reacts with ammonia to form carbamoyl phosphate. In Buchnera aphidicola subsp. Acyrthosiphon pisum (strain APS) (Acyrthosiphon pisum symbiotic bacterium), this protein is Carbamoyl phosphate synthase large chain.